Reading from the N-terminus, the 404-residue chain is L-cysteine:1D-myo-inositol 2-amino-2-deoxy-alpha-D-glucopyranoside ligase (404 aa).

Cysteine 35 serves as a coordination point for Zn(2+). Residues 35 to 38, threonine 50, and 73 to 75 contribute to the L-cysteinyl-5'-AMP site; these read CGIT and NVT. The short motif at 37-47 is the 'HIGH' region element; that stretch reads ITPYDATHLGH. A 'ERGGDP' region motif is present at residues 178–183; that stretch reads ERGGDP. Tryptophan 219 is a binding site for L-cysteinyl-5'-AMP. Position 223 (cysteine 223) interacts with Zn(2+). 241-243 contributes to the L-cysteinyl-5'-AMP binding site; it reads GND. A Zn(2+)-binding site is contributed by histidine 248. An L-cysteinyl-5'-AMP-binding site is contributed by isoleucine 275. Positions 281 to 285 match the 'KMSKS' region motif; that stretch reads KMSKS.

Belongs to the class-I aminoacyl-tRNA synthetase family. MshC subfamily. As to quaternary structure, monomer. The cofactor is Zn(2+).

The enzyme catalyses 1D-myo-inositol 2-amino-2-deoxy-alpha-D-glucopyranoside + L-cysteine + ATP = 1D-myo-inositol 2-(L-cysteinylamino)-2-deoxy-alpha-D-glucopyranoside + AMP + diphosphate + H(+). Its function is as follows. Catalyzes the ATP-dependent condensation of GlcN-Ins and L-cysteine to form L-Cys-GlcN-Ins. The protein is L-cysteine:1D-myo-inositol 2-amino-2-deoxy-alpha-D-glucopyranoside ligase of Salinispora tropica (strain ATCC BAA-916 / DSM 44818 / JCM 13857 / NBRC 105044 / CNB-440).